Here is a 411-residue protein sequence, read N- to C-terminus: Probable peptidoglycan glycosyltransferase FtsW (411 aa).

Over 1–40 (MLERMLPFLGRKRDKAAADLPVRVGHSAPRNSRMLEYDQN) the chain is Cytoplasmic. Residues 41-61 (LVWVTLLLLAYGLVMVYSATI) traverse the membrane as a helical segment. Residues 62 to 81 (SFHDSPRYAQWSPYHYFIRD) lie on the Periplasmic side of the membrane. The chain crosses the membrane as a helical span at residues 82-102 (LFSIAAALLASWIVVQIPMAE). Topologically, residues 103–109 (LQKWSMR) are cytoplasmic. Residues 110–130 (FFFLSLIGLVLVLLPHIGKDV) form a helical membrane-spanning segment. The Periplasmic portion of the chain corresponds to 131 to 136 (NGSKRW). Residues 137-157 (VVFPGGLNFQPSELVKLTALI) traverse the membrane as a helical segment. Over 158-172 (YAADFMVRKQEVKQS) the chain is Cytoplasmic. Residues 173-193 (LLKTFLPMMAVMMIVGVLLLA) form a helical membrane-spanning segment. The Periplasmic portion of the chain corresponds to 194–196 (EPD). The helical transmembrane segment at 197 to 217 (MGAFLVIASITLAILFLGGAN) threads the bilayer. Residues 218–219 (GK) are Cytoplasmic-facing. The helical transmembrane segment at 220 to 240 (LFSVFSVAVIGAFVLMIVLSP) threads the bilayer. Residues 241–298 (WRRDRIFAYLNPWSESNALGSAYQLSHALIAMGRGEWFGVGLGGSIEKLHYLPEAHTD) lie on the Periplasmic side of the membrane. Residues 299–319 (FLLAIIGEELGLVGVGVVIFA) traverse the membrane as a helical segment. The Cytoplasmic segment spans residues 320 to 347 (FYWIVRRAFDIGRQALVLDRMYSALVAQ). Residues 348–368 (GIGVWIGGQAFINIGVNLGLL) traverse the membrane as a helical segment. The Periplasmic portion of the chain corresponds to 369–374 (PTKGLT). A helical transmembrane segment spans residues 375-395 (LPLMSYGGSALLLNCMAIAVL). Residues 396 to 411 (LRVDFENRILMRGGHV) are Cytoplasmic-facing.

The protein belongs to the SEDS family. FtsW subfamily.

Its subcellular location is the cell inner membrane. The enzyme catalyses [GlcNAc-(1-&gt;4)-Mur2Ac(oyl-L-Ala-gamma-D-Glu-L-Lys-D-Ala-D-Ala)](n)-di-trans,octa-cis-undecaprenyl diphosphate + beta-D-GlcNAc-(1-&gt;4)-Mur2Ac(oyl-L-Ala-gamma-D-Glu-L-Lys-D-Ala-D-Ala)-di-trans,octa-cis-undecaprenyl diphosphate = [GlcNAc-(1-&gt;4)-Mur2Ac(oyl-L-Ala-gamma-D-Glu-L-Lys-D-Ala-D-Ala)](n+1)-di-trans,octa-cis-undecaprenyl diphosphate + di-trans,octa-cis-undecaprenyl diphosphate + H(+). Its pathway is cell wall biogenesis; peptidoglycan biosynthesis. Peptidoglycan polymerase that is essential for cell division. The sequence is that of Probable peptidoglycan glycosyltransferase FtsW from Thiomonas intermedia (strain K12) (Thiobacillus intermedius).